Consider the following 236-residue polypeptide: METLKLSALPEKDKQQPISHGRFEAYVDNGGTVLAVAGKDYCVIAGDTRMSDGGYGIQTRKYTKIFQLTKKCVLATSGMQADTIALQKRLKSMLESFEKEHGKPMSTPAIAQFLSNTLYYKRFFPYYTFNLVAGVDEQGEGWIWTYDAVGSHERVKYSSQGSGNQLVIPLLDNQVAKFNQQIVEGNKDVSCEQVVSFVKDSITSAGERDIYTGDFADIVVVDKNGVHWEKFELKLD.

It belongs to the peptidase T1B family. The 26S proteasome consists of a 20S proteasome core and two 19S regulatory subunits. The 20S proteasome core is composed of 28 subunits that are arranged in four stacked rings, resulting in a barrel-shaped structure. The two end rings are each formed by seven alpha subunits, and the two central rings are each formed by seven beta subunits. The catalytic chamber with the active sites is on the inside of the barrel.

The protein localises to the cytoplasm. It is found in the nucleus. Functionally, non-catalytic component of the proteasome, a multicatalytic proteinase complex which is characterized by its ability to cleave peptides with Arg, Phe, Tyr, Leu, and Glu adjacent to the leaving group at neutral or slightly basic pH. The proteasome has an ATP-dependent proteolytic activity. The protein is Proteasome subunit beta type-1 (psmB1) of Dictyostelium discoideum (Social amoeba).